Reading from the N-terminus, the 435-residue chain is Keratin, type I cytoskeletal 18 (435 aa).

The segment covering 1–28 (MSLRSSYSVRSSTSQVPVSQMSQMSQMS) has biased composition (low complexity). The interval 1–36 (MSLRSSYSVRSSTSQVPVSQMSQMSQMSIKRTTNVP) is disordered. The tract at residues 2-88 (SLRSSYSVRS…TGATGDIMGN (87 aa)) is head. The tract at residues 89–123 (EKMAMQNLNDRLASYLRSETLEQANSKLELKIREA) is coil 1A. An IF rod domain is found at 89-399 (EKMAMQNLND…RLLDGGDFKL (311 aa)). Residues 124-140 (LEKKGPEVCDYSRFQPI) are linker 1. The segment at 141–232 (IDDLRRKIFD…KNHDNEVMEL (92 aa)) is coil 1B. The tract at residues 233 to 256 (RNQISHSGVQVDVDAPKGQDLAKI) is linker 12. The tract at residues 257 to 394 (MEEIRSKYEK…IATYRRLLDG (138 aa)) is coil 2. Residues 395-435 (GDFKLQDALEEQKRVKVMTVTQTLVDGKVVSSSTETKEKKF) are tail.

It belongs to the intermediate filament family. As to quaternary structure, heterotetramer of two type I and two type II keratins. Keratin-18 associates with keratin-8. Post-translationally, phosphorylated. In terms of processing, proteolytically cleaved by caspases during epithelial cell apoptosis. As to expression, abundantly expressed in an even distribution throughout the optic nerve, localizing specifically to the astrocyte domains. Moderately expressed in spinal cord, brain, liver and oocytes.

In terms of biological role, when phosphorylated, plays a role in filament reorganization. This Carassius auratus (Goldfish) protein is Keratin, type I cytoskeletal 18 (krt18).